The sequence spans 1642 residues: Cortactin-binding protein 2 (1642 aa).

5 disordered regions span residues 1-27, 203-222, 366-433, 446-471, and 491-611; these read MATD…AEAA, KKKT…RSTE, IGAS…HPGL, GSNA…SPTS, and RFTS…PSID. Residues 119-276 are a coiled coil; that stretch reads RKMQERMSTQ…EQLKRGTDSK (158 aa). Over residues 385–394 the composition is skewed to polar residues; that stretch reads GPSTGSTADL. Residues 395 to 407 are compositionally biased toward low complexity; it reads TSSPTPVPSTVSP. Residue Arg491 is modified to Asymmetric dimethylarginine. Positions 497-506 are enriched in pro residues; the sequence is AGAPPRPGAP. A compositionally biased stretch (polar residues) spans 576–586; the sequence is TVASPPSTLPQ. ANK repeat units lie at residues 702–732, 736–765, 769–798, 802–831, 835–864, and 904–934; these read GRPT…DINY, DGHS…QVNV, NGFT…NINH, GGQT…DRSV, DGWT…PAHG, and EGWT…EPER. Residues 1440–1469 are disordered; the sequence is ESGAWRKVSTSPRKKSGRFSSPTWNKPDLS. Residue Ser1513 is modified to Phosphoserine. Residues 1546–1642 are disordered; the sequence is RRFDSSGNNP…NSRDLEPTQK (97 aa). 2 stretches are compositionally biased toward polar residues: residues 1552–1563 and 1571–1588; these read GNNPVFSATVNN and KEVS…SNSK. The segment covering 1613–1627 has biased composition (low complexity); the sequence is SQNTKRSSSSSNTRQ.

Interacts with CTTN/cortactin SH3 domain. Interacts with STRN, STRN4/zinedin and MOB4/phocein; this interactions mediate the association with the STRIPAK core complex and may regulate dendritic spine distribution of the STRIPAK complex in hippocampal neurons. Activation of glutamate receptors weakens the interaction with STRN and STRN4.

It is found in the cytoplasm. The protein resides in the cell cortex. It localises to the cell projection. The protein localises to the dendritic spine. Regulates the dendritic spine distribution of CTTN/cortactin in hippocampal neurons, and thus controls dendritic spinogenesis and dendritic spine maintenance. Associates with the striatin-interacting phosphatase and kinase (STRIPAK) core complex to regulate dendritic spine distribution of the STRIPAK complex in hippocampal neurons. The chain is Cortactin-binding protein 2 (CTTNBP2) from Muntiacus reevesi (Reeves' muntjac).